The following is a 408-amino-acid chain: G patch domain-containing protein 4 (408 aa).

An N-acetylmethionine modification is found at Met1. Thr4 carries the phosphothreonine modification. Positions 11–57 constitute a G-patch domain; that stretch reads GMKFAEEQLLKHGWTQGKGLGRKENGITQALRVTLKQDTYGVGHDPA. Residue Lys46 forms a Glycyl lysine isopeptide (Lys-Gly) (interchain with G-Cter in SUMO2) linkage. Thr116 is subject to Phosphothreonine. Disordered stretches follow at residues 116-141 and 187-408; these read TSSGEKPDKDWESCSDDDSQEPKPPN and GQDP…KKRD. Phosphoserine is present on residues Ser128 and Ser130. Basic and acidic residues-rich tracts occupy residues 222–236, 245–257, and 274–283; these read RSAEKYSEHTDESIR, HQEERVTDEREGT, and LKNREHVDRS. The span at 340-354 shows a compositional bias: acidic residues; sequence EEDLNTEDEEVEEAL. Residues 358 to 372 show a composition bias toward basic and acidic residues; that stretch reads GTREAESRSCSDQKR. Over residues 398 to 408 the composition is skewed to basic residues; it reads KAKKKKQKKRD.

The polypeptide is G patch domain-containing protein 4 (GPATCH4) (Bos taurus (Bovine)).